A 160-amino-acid chain; its full sequence is Large ribosomal subunit protein uL22c (160 aa).

Belongs to the universal ribosomal protein uL22 family. Part of the 50S ribosomal subunit.

It is found in the plastid. The protein resides in the chloroplast. Its function is as follows. This protein binds specifically to 23S rRNA. The globular domain of the protein is located near the polypeptide exit tunnel on the outside of the subunit, while an extended beta-hairpin is found that lines the wall of the exit tunnel in the center of the 70S ribosome. This is Large ribosomal subunit protein uL22c (rpl22) from Aethionema cordifolium (Lebanon stonecress).